The primary structure comprises 951 residues: Coiled-coil and C2 domain-containing protein 1A (951 aa).

4 disordered regions span residues 80–139, 185–266, 306–346, and 437–491; these read CMRD…LETT, AIDE…RQRD, VDLS…PPPR, and NQDE…TRAQ. Over residues 84 to 104 the composition is skewed to acidic residues; the sequence is PDEDEEEGTDEDDLEADDDLL. Phosphothreonine occurs at positions 92, 204, and 206. The segment covering 201-210 has biased composition (low complexity); sequence PASTPTYSPA. Ser208 is subject to Phosphoserine; by CDK1. Ser253 and Ser324 each carry phosphoserine. Over residues 311–333 the composition is skewed to pro residues; the sequence is LPPPPDQLPPDPPSPPSQPPTPA. Residues 346 to 392 adopt a coiled-coil conformation; that stretch reads RTLLEALEQRMERYQVAAAQAKSKGDQRKARMHERIVKQYQDAIRAH. Ser455 is modified (phosphoserine). Low complexity predominate over residues 475–488; the sequence is SAPTAKAPPKATST. A coiled-coil region spans residues 484 to 517; it reads KATSTRAQQQLAFLEGRKKQLLQAALRAKQKNDV. One can recognise a C2 domain in the interval 637–771; that stretch reads RFEQRTFSVI…EIACEVREIL (135 aa). Residues 818–841 are disordered; the sequence is TQVAGPKGKAPPVPAPARESGNRS.

This sequence belongs to the CC2D1 family. Post-translationally, phosphorylation on Ser-208 by CDK1 promotes spindle pole localization and association with SCC1/RAD21.

It localises to the cytoplasm. The protein localises to the nucleus. Its subcellular location is the cytoskeleton. The protein resides in the microtubule organizing center. It is found in the centrosome. Functionally, transcription factor that binds specifically to the DRE (dual repressor element) and represses HTR1A gene transcription in neuronal cells. The combination of calcium and ATP specifically inactivates the binding with FRE. May play a role in the altered regulation of HTR1A associated with anxiety and major depression. Mediates HDAC-independent repression of HTR1A promoter in neuronal cell. Performs essential function in controlling functional maturation of synapses. Plays distinct roles depending on its localization. When cytoplasmic, acts as a scaffold protein in the PI3K/PDK1/AKT pathway. Repressor of HTR1A when nuclear. In the centrosome, regulates spindle pole localization of the cohesin subunit SCC1/RAD21, thereby mediating centriole cohesion during mitosis. The protein is Coiled-coil and C2 domain-containing protein 1A (CC2D1A) of Homo sapiens (Human).